The following is a 413-amino-acid chain: Serine/threonine-protein phosphatase 7 (413 aa).

A disulfide bridge connects residues cysteine 28 and cysteine 67. Mn(2+) is bound by residues aspartate 84, histidine 86, aspartate 113, and asparagine 145. Catalysis depends on histidine 146, which acts as the Proton donor. Mn(2+)-binding residues include histidine 197 and histidine 303. The interval 391–413 (NVIDSDDEMDKSAMDTNNEQPNS) is disordered. The segment covering 404–413 (MDTNNEQPNS) has biased composition (polar residues).

This sequence belongs to the PPP phosphatase family. PP-7 subfamily. As to quaternary structure, monomer, homodimer, and heteromer. Interacts with calmodulin (CaM3 and CaM4) and HSFA1A/HSF1. The cofactor is Mn(2+). Expressed in leaves, and, to a lower extent, in stems and flowers.

It localises to the nucleus. The protein resides in the nucleoplasm. It carries out the reaction O-phospho-L-seryl-[protein] + H2O = L-seryl-[protein] + phosphate. It catalyses the reaction O-phospho-L-threonyl-[protein] + H2O = L-threonyl-[protein] + phosphate. With respect to regulation, inhibited by NaF and orthovanadate, as well as by divalent cations such as Ni(2+) and Zn(2+). Inhibited by polylysine with myelin basic protein as substrate, but activated by polylysine with pNPP as substrate. Reversibly regulated by redox agents. Inhibited by submillimolar Pi concentrations. Slightly repressed by calmodulin (CaM). Functionally, phosphatase active on para-nitrophenylphosphate (pNPP) and on various phosphoproteins such as myelin basic protein. Seems to act as a positive regulator of cryptochrome signaling involved in hypocotyl growth inhibition and cotyledon expansion under white and blue light conditions. Confers thermotolerance. Required for heat shock mediated-signaling pathway that leads to the expression of heat shock proteins (HSPs). This chain is Serine/threonine-protein phosphatase 7 (PP7), found in Arabidopsis thaliana (Mouse-ear cress).